A 199-amino-acid polypeptide reads, in one-letter code: Chaperone protein TorD (199 aa).

It belongs to the TorD/DmsD family. TorD subfamily.

The protein resides in the cytoplasm. Involved in the biogenesis of TorA. Acts on TorA before the insertion of the molybdenum cofactor and, as a result, probably favors a conformation of the apoenzyme that is competent for acquiring the cofactor. This is Chaperone protein TorD from Shigella dysenteriae serotype 1 (strain Sd197).